Consider the following 854-residue polypeptide: Translation initiation factor IF-2 (854 aa).

Over residues 61–72 the composition is skewed to basic residues; it reads KNIKTPTAKKPK. 2 disordered regions span residues 61–115 and 167–186; these read KNIK…LASA and ESLK…KKES. The segment covering 73–108 has biased composition (basic and acidic residues); the sequence is KENAKDQEKLNESEKKEPKKEESKEQEKQEIIDTHK. The 168-residue stretch at 353-520 folds into the tr-type G domain; that stretch reads TRAPVITIMG…IVLLQADILE (168 aa). A G1 region spans residues 362–369; the sequence is GHVDHGKT. A GTP-binding site is contributed by 362–369; that stretch reads GHVDHGKT. A G2 region spans residues 387 to 391; the sequence is GITQH. The segment at 408 to 411 is G3; the sequence is DTPG. GTP-binding positions include 408-412 and 462-465; these read DTPGH and NKMD. Residues 462-465 form a G4 region; it reads NKMD. The tract at residues 498-500 is G5; it reads SAK.

The protein belongs to the TRAFAC class translation factor GTPase superfamily. Classic translation factor GTPase family. IF-2 subfamily.

It localises to the cytoplasm. Its function is as follows. One of the essential components for the initiation of protein synthesis. Protects formylmethionyl-tRNA from spontaneous hydrolysis and promotes its binding to the 30S ribosomal subunits. Also involved in the hydrolysis of GTP during the formation of the 70S ribosomal complex. The chain is Translation initiation factor IF-2 from Campylobacter jejuni subsp. doylei (strain ATCC BAA-1458 / RM4099 / 269.97).